The following is a 270-amino-acid chain: Phosphatidylglycerol--prolipoprotein diacylglyceryl transferase (270 aa).

Helical transmembrane passes span 19–39 (FPVYWYGIIIGTGVLLGLWLA), 56–76 (LVLIAVPIAILFARMYYVIFE), 92–112 (QGGLAIHGGLIGAVITGILFA), and 116–136 (GVSFWKLADIAAPSILLGQAI). Arg-138 is an a 1,2-diacyl-sn-glycero-3-phospho-(1'-sn-glycerol) binding site. Helical transmembrane passes span 178–198 (HPTFLYESLWNFAGVILLLAL), 206–226 (GELFFTYLIWYSIGRFFVEGL), and 236–256 (LRIAQVMSIGLVVISIIFIIV).

Belongs to the Lgt family.

It localises to the cell membrane. It carries out the reaction L-cysteinyl-[prolipoprotein] + a 1,2-diacyl-sn-glycero-3-phospho-(1'-sn-glycerol) = an S-1,2-diacyl-sn-glyceryl-L-cysteinyl-[prolipoprotein] + sn-glycerol 1-phosphate + H(+). The protein operates within protein modification; lipoprotein biosynthesis (diacylglyceryl transfer). Its function is as follows. Catalyzes the transfer of the diacylglyceryl group from phosphatidylglycerol to the sulfhydryl group of the N-terminal cysteine of a prolipoprotein, the first step in the formation of mature lipoproteins. The sequence is that of Phosphatidylglycerol--prolipoprotein diacylglyceryl transferase from Bacillus cereus (strain ZK / E33L).